A 260-amino-acid polypeptide reads, in one-letter code: Protein TONNEAU 1a (260 aa).

The LisH domain occupies 73 to 105 (SGRLLSALICEYLDWAQLNHTLIVYQPESNLPK). Disordered stretches follow at residues 147–224 (TQGM…EEVT) and 236–260 (DRKTRNLTSSWRNVRDGTNEEEGRD). Residues 161–175 (ESSSSLESRNPPRRS) show a composition bias toward low complexity. The span at 248–260 (NVRDGTNEEEGRD) shows a compositional bias: basic and acidic residues.

Interacts with CEN1, LNG1/TRM2 and LNG2/TRM1 (via C-terminus).

It is found in the cytoplasm. Its subcellular location is the cytoskeleton. In terms of biological role, involved in the control of the dynamic organization of the cortical cytoskeleton. May play a role in the organization of microtubule arrays at the centrosome through interaction with centrin 1 (CEN1). The protein is Protein TONNEAU 1a (TON1A) of Arabidopsis thaliana (Mouse-ear cress).